Here is a 107-residue protein sequence, read N- to C-terminus: Nucleoid-associated protein A1G_07310 (107 aa).

The protein belongs to the YbaB/EbfC family. In terms of assembly, homodimer.

The protein localises to the cytoplasm. It localises to the nucleoid. Binds to DNA and alters its conformation. May be involved in regulation of gene expression, nucleoid organization and DNA protection. The polypeptide is Nucleoid-associated protein A1G_07310 (Rickettsia rickettsii (strain Sheila Smith)).